We begin with the raw amino-acid sequence, 539 residues long: Beta-agarase A (539 aa).

The first 19 residues, 1–19, serve as a signal peptide directing secretion; it reads MKKNYLLLYFIFLLCGSIA. One can recognise a GH16 domain in the interval 21-289; the sequence is QDWNGIPVPA…WIRVYKPVAV (269 aa). Residues Trp-73, 82 to 92, 96 to 98, and Glu-144 contribute to the substrate site; these read NAPQAWTNGSQ and QAQ. Residue Glu-147 is the Nucleophile of the active site. The active-site Proton donor is the Glu-152. 2 residues coordinate substrate: Arg-176 and Asp-271. The disordered stretch occupies residues 332–353; it reads WANTNDIGSRDRGASNGRNNIN.

This sequence belongs to the glycosyl hydrolase 16 family. In terms of assembly, monomer. Post-translationally, proteolytically cleaved into mature beta-agarase A catalytic chain (AgaAc).

It localises to the secreted. It carries out the reaction Hydrolysis of (1-&gt;4)-beta-D-galactosidic linkages in agarose, giving the tetramer as the predominant product.. In terms of biological role, cleaves the beta-1,4-linkages between beta-D-galactose and alpha-L-3,6-anhydro-galactose residues in agarose. Cleaves agarose in a random manner with retention of the anomeric-bond configuration, producing beta-anomers that give rise progressively to alpha-anomers when mutarotation takes place. This chain is Beta-agarase A (agaA), found in Zobellia galactanivorans (strain DSM 12802 / CCUG 47099 / CIP 106680 / NCIMB 13871 / Dsij).